The primary structure comprises 316 residues: Vacuolar membrane protein YNL058C (316 aa).

The disordered stretch occupies residues 32 to 60; sequence KPTSSVVSETSSKSLPSLTSSAFSTSSGA. The helical transmembrane segment at 93–113 threads the bilayer; that stretch reads VYIAVGAVIGAIFISILIWWL. A phosphoserine mark is found at serine 148, serine 256, and serine 276. A disordered region spans residues 240–304; the sequence is EEEERKLNLN…KAHKRQAPSM (65 aa). Residues 256-271 show a composition bias toward basic and acidic residues; the sequence is SPERKEKKINSMEGYH.

Belongs to the PRM5 family.

It is found in the vacuole membrane. The polypeptide is Vacuolar membrane protein YNL058C (Saccharomyces cerevisiae (strain ATCC 204508 / S288c) (Baker's yeast)).